The primary structure comprises 189 residues: Large ribosomal subunit protein uL6 (189 aa).

It belongs to the universal ribosomal protein uL6 family. In terms of assembly, part of the 50S ribosomal subunit.

Functionally, this protein binds to the 23S rRNA, and is important in its secondary structure. It is located near the subunit interface in the base of the L7/L12 stalk, and near the tRNA binding site of the peptidyltransferase center. The protein is Large ribosomal subunit protein uL6 of Phocaeicola vulgatus (strain ATCC 8482 / DSM 1447 / JCM 5826 / CCUG 4940 / NBRC 14291 / NCTC 11154) (Bacteroides vulgatus).